Here is a 150-residue protein sequence, read N- to C-terminus: MSNKVGLIHSLKDGQSYMEIWPVRKELGAIFPEQRIIKATRFGIKVMPAVAAISVLTQMAFNNYNALPQSIVVALFAISLPLQGIWWLGARSNTKLPPSLASWYRELHQKIVETGFALEPVKARPRYKELAIILNRAFRQLDKSSLERWF.

2 helical membrane-spanning segments follow: residues 42-62 (FGIKVMPAVAAISVLTQMAFN) and 70-90 (SIVVALFAISLPLQGIWWLGA).

Belongs to the UPF0208 family.

It localises to the cell inner membrane. This is UPF0208 membrane protein VP2081 from Vibrio parahaemolyticus serotype O3:K6 (strain RIMD 2210633).